Reading from the N-terminus, the 381-residue chain is RING-H2 finger protein ATL1 (381 aa).

The tract at residues 1–31 is disordered; it reads MDLTDRRNPFNNLVFPPPPPPPSTTFTSPIF. The chain crosses the membrane as a helical span at residues 46–66; it reads IAVIGILATAFLLVSYYIFVI. The segment at 134-176 adopts an RING-type; atypical zinc-finger fold; that stretch reads CSVCLNEFQEDEKLRIIPNCCHVFHIDCIDIWLQGNANCPLCR. 2 disordered regions span residues 249–269 and 334–354; these read TSNEVSTGNSPKSVSPLPIKF and RQIPVAGDGEDSSSSGGGNSR. Residues 250 to 261 show a composition bias toward polar residues; that stretch reads SNEVSTGNSPKS.

This sequence belongs to the RING-type zinc finger family. ATL subfamily.

The protein resides in the membrane. The catalysed reaction is S-ubiquitinyl-[E2 ubiquitin-conjugating enzyme]-L-cysteine + [acceptor protein]-L-lysine = [E2 ubiquitin-conjugating enzyme]-L-cysteine + N(6)-ubiquitinyl-[acceptor protein]-L-lysine.. Its pathway is protein modification; protein ubiquitination. This is RING-H2 finger protein ATL1 (ATL1) from Arabidopsis thaliana (Mouse-ear cress).